A 699-amino-acid chain; its full sequence is tRNA(Met) cytidine acetyltransferase TmcA (699 aa).

ATP is bound by residues Q178, 200 to 209, and R322; that span reads GRGKSTLAGM. One can recognise an N-acetyltransferase domain in the interval 408–547; the sequence is MHIASAQVAG…SGCYSAMAIL (140 aa). Acetyl-CoA-binding positions include 475–477 and 482–488; these read IAV and RRQGIGR.

It belongs to the RNA cytidine acetyltransferase family. TmcA subfamily.

It is found in the cytoplasm. It carries out the reaction cytidine(34) in elongator tRNA(Met) + acetyl-CoA + ATP + H2O = N(4)-acetylcytidine(34) in elongator tRNA(Met) + ADP + phosphate + CoA + H(+). Its function is as follows. Catalyzes the formation of N(4)-acetylcytidine (ac(4)C) at the wobble position of tRNA(Met), by using acetyl-CoA as an acetyl donor and ATP (or GTP). The protein is tRNA(Met) cytidine acetyltransferase TmcA of Pectobacterium atrosepticum (strain SCRI 1043 / ATCC BAA-672) (Erwinia carotovora subsp. atroseptica).